Consider the following 852-residue polypeptide: Bifunctional uridylyltransferase/uridylyl-removing enzyme (852 aa).

The tract at residues 1 to 318 is uridylyltransferase; the sequence is MPENLSSALE…STPVRVTLRI (318 aa). The uridylyl-removing stretch occupies residues 319 to 672; sequence DDDYIQVNNQ…SRILPQSDSF (354 aa). In terms of domain architecture, HD spans 436–558; it reads VDDHILAVVR…VQTHERLSAL (123 aa). ACT domains lie at 673–757 and 785–852; these read QVMV…SCNR and SVEI…EQLA.

The protein belongs to the GlnD family. Mg(2+) is required as a cofactor.

The enzyme catalyses [protein-PII]-L-tyrosine + UTP = [protein-PII]-uridylyl-L-tyrosine + diphosphate. It carries out the reaction [protein-PII]-uridylyl-L-tyrosine + H2O = [protein-PII]-L-tyrosine + UMP + H(+). With respect to regulation, uridylyltransferase (UTase) activity is inhibited by glutamine, while glutamine activates uridylyl-removing (UR) activity. Its function is as follows. Modifies, by uridylylation and deuridylylation, the PII regulatory proteins (GlnB and homologs), in response to the nitrogen status of the cell that GlnD senses through the glutamine level. Under low glutamine levels, catalyzes the conversion of the PII proteins and UTP to PII-UMP and PPi, while under higher glutamine levels, GlnD hydrolyzes PII-UMP to PII and UMP (deuridylylation). Thus, controls uridylylation state and activity of the PII proteins, and plays an important role in the regulation of nitrogen assimilation and metabolism. The sequence is that of Bifunctional uridylyltransferase/uridylyl-removing enzyme from Neisseria gonorrhoeae (strain ATCC 700825 / FA 1090).